The sequence spans 342 residues: Dihydroorotase (342 aa).

Residues His-13 and His-15 each contribute to the Zn(2+) site. Substrate is bound by residues 15–17 (HLR) and Asn-41. The Zn(2+) site is built by Lys-97, His-134, and His-172. An N6-carboxylysine modification is found at Lys-97. Substrate is bound at residue His-134. Residue Leu-217 coordinates substrate. Asp-245 is a binding site for Zn(2+). Asp-245 is a catalytic residue. Substrate is bound by residues His-249 and Ala-261.

The protein belongs to the metallo-dependent hydrolases superfamily. DHOase family. Class II DHOase subfamily. In terms of assembly, homodimer. Zn(2+) is required as a cofactor.

The catalysed reaction is (S)-dihydroorotate + H2O = N-carbamoyl-L-aspartate + H(+). It functions in the pathway pyrimidine metabolism; UMP biosynthesis via de novo pathway; (S)-dihydroorotate from bicarbonate: step 3/3. Its function is as follows. Catalyzes the reversible cyclization of carbamoyl aspartate to dihydroorotate. This chain is Dihydroorotase, found in Shewanella amazonensis (strain ATCC BAA-1098 / SB2B).